Here is an 87-residue protein sequence, read N- to C-terminus: Dynein light chain 1, cytoplasmic (87 aa).

The protein belongs to the dynein light chain family. In terms of assembly, homodimer. Cytoplasmic dynein consists of two catalytic heavy chains (HCs) and a number of non-catalytic subunits which present intermediate chains (ICs), light intermediate chains (LICs) and light chains (LCs). Component of the nuclear pore complex (NPC). NPC constitutes the exclusive means of nucleocytoplasmic transport. NPCs allow the passive diffusion of ions and small molecules and the active, nuclear transport receptor-mediated bidirectional transport of macromolecules such as proteins, RNAs, ribonucleoparticles (RNPs), and ribosomal subunits across the nuclear envelope. Due to its 8-fold rotational symmetry, all subunits are present with 8 copies or multiples thereof.

Its subcellular location is the cytoplasm. It localises to the cytoskeleton. It is found in the nucleus. The protein resides in the nuclear pore complex. In terms of biological role, acts as one of several non-catalytic accessory components of the cytoplasmic dynein complex that are thought to be involved in linking dynein to cargos and to adapter proteins that regulate dynein function. Cytoplasmic dynein 1 acts as a motor for the intracellular retrograde motility of vesicles and organelles along microtubules. May play a role in changing or maintaining the spatial distribution of cytoskeletal structures. Also a component of the nuclear pore complex. The chain is Dynein light chain 1, cytoplasmic (DYN2) from Kluyveromyces lactis (strain ATCC 8585 / CBS 2359 / DSM 70799 / NBRC 1267 / NRRL Y-1140 / WM37) (Yeast).